A 264-amino-acid chain; its full sequence is uncharacterized protein (264 aa).

A helical membrane pass occupies residues 7-27 (LTLGICLVLLIILIVGYVIMT).

It belongs to the staphylococcal tandem lipoprotein family.

It localises to the cell membrane. This is an uncharacterized protein from Staphylococcus aureus (strain NCTC 8325 / PS 47).